The chain runs to 295 residues: MNYMQDNDKLYRYLFQDRAVRGEWVRLNQTFIDTLNTHHYPNVVRNLLGEMMVATNLLTATLKFNGDITVQIQGDGPLRLALVNGNHRQQIRALARIDGEIRDDMSLHQLIGKGVLVITIAPQEGERYQGIIALDKPTVTECLEEYFQRSEQLQTQLLIRVGEYEGKPVAAGMLLQIMPDGSGSPDDFDHLATLTATVKDEEIFGLPAEELLYRLYHEETVELYEPQAIQFHCGCSQERSGSALLLINDDEIDEILEEHNGSIDMQCECCGTHYFFNKEAIEKLKKSGEEPVTTH.

2 disulfides stabilise this stretch: Cys-233–Cys-235 and Cys-267–Cys-270.

This sequence belongs to the HSP33 family. In terms of processing, under oxidizing conditions two disulfide bonds are formed involving the reactive cysteines. Under reducing conditions zinc is bound to the reactive cysteines and the protein is inactive.

It localises to the cytoplasm. Redox regulated molecular chaperone. Protects both thermally unfolding and oxidatively damaged proteins from irreversible aggregation. Plays an important role in the bacterial defense system toward oxidative stress. The chain is 33 kDa chaperonin from Mannheimia succiniciproducens (strain KCTC 0769BP / MBEL55E).